A 264-amino-acid polypeptide reads, in one-letter code: Proteasome subunit beta type-4 (264 aa).

N-acetylmethionine is present on M1. The propeptide occupies 1-45 (MEAFWESRAGHWAGGPAPGQFYRIPATPSGLMDPASAPCEGPITR). Y102 is subject to Phosphotyrosine.

Belongs to the peptidase T1B family. As to quaternary structure, the 26S proteasome consists of a 20S proteasome core and two 19S regulatory subunits. The 20S proteasome core is a barrel-shaped complex made of 28 subunits that are arranged in four stacked rings. The two outer rings are each formed by seven alpha subunits, and the two inner rings are formed by seven beta subunits. The proteolytic activity is exerted by three beta-subunits PSMB5, PSMB6 and PSMB7. Forms a ternary complex with SMAD1 and OAZ1 before PSMB4 is incorporated into the 20S proteasome. Interacts with PRPF19. As to expression, detected in liver (at protein level).

The protein localises to the cytoplasm. It localises to the nucleus. Its function is as follows. Non-catalytic component of the 20S core proteasome complex involved in the proteolytic degradation of most intracellular proteins. This complex plays numerous essential roles within the cell by associating with different regulatory particles. Associated with two 19S regulatory particles, forms the 26S proteasome and thus participates in the ATP-dependent degradation of ubiquitinated proteins. The 26S proteasome plays a key role in the maintenance of protein homeostasis by removing misfolded or damaged proteins that could impair cellular functions, and by removing proteins whose functions are no longer required. Associated with the PA200 or PA28, the 20S proteasome mediates ubiquitin-independent protein degradation. This type of proteolysis is required in several pathways including spermatogenesis (20S-PA200 complex) or generation of a subset of MHC class I-presented antigenic peptides (20S-PA28 complex). SMAD1/OAZ1/PSMB4 complex mediates the degradation of the CREBBP/EP300 repressor SNIP1. This chain is Proteasome subunit beta type-4 (Psmb4), found in Mus musculus (Mouse).